Reading from the N-terminus, the 716-residue chain is Polyribonucleotide nucleotidyltransferase (716 aa).

Positions 485 and 491 each coordinate Mg(2+). A KH domain is found at 552–611; that stretch reads PKITTISVPKEKIRDVIGSGGKVIREIVEYSGAKVDIGDDGTVTIAASNDEQAQKAIARI. The S1 motif domain maps to 621-689; that stretch reads GRIYEGKVVK…DRGKVKLSMR (69 aa).

It belongs to the polyribonucleotide nucleotidyltransferase family. Mg(2+) is required as a cofactor.

The protein localises to the cytoplasm. The enzyme catalyses RNA(n+1) + phosphate = RNA(n) + a ribonucleoside 5'-diphosphate. Functionally, involved in mRNA degradation. Catalyzes the phosphorolysis of single-stranded polyribonucleotides processively in the 3'- to 5'-direction. The protein is Polyribonucleotide nucleotidyltransferase of Gluconobacter oxydans (strain 621H) (Gluconobacter suboxydans).